The following is a 450-amino-acid chain: Bifunctional protein GlmU (450 aa).

A pyrophosphorylase region spans residues 1-226 (MLAVAVLAAG…ADEVNGINNR (226 aa)). Residues 7 to 10 (LAAG), Lys-21, Gln-73, and 78 to 79 (GT) each bind UDP-N-acetyl-alpha-D-glucosamine. Residue Asp-103 participates in Mg(2+) binding. UDP-N-acetyl-alpha-D-glucosamine contacts are provided by Gly-140, Glu-155, Asn-170, and Asn-224. Asn-224 contacts Mg(2+). A linker region spans residues 227–247 (RQLAQCEALLQQRLRHHWMDE). The N-acetyltransferase stretch occupies residues 248-450 (GVTFIDPESC…TKEGWAERKV (203 aa)). UDP-N-acetyl-alpha-D-glucosamine-binding residues include Arg-329 and Lys-347. The active-site Proton acceptor is His-359. Tyr-362 and Asn-373 together coordinate UDP-N-acetyl-alpha-D-glucosamine. Residues Ala-376, 382-383 (NY), Ala-419, and Arg-436 contribute to the acetyl-CoA site.

In the N-terminal section; belongs to the N-acetylglucosamine-1-phosphate uridyltransferase family. It in the C-terminal section; belongs to the transferase hexapeptide repeat family. As to quaternary structure, homotrimer. The cofactor is Mg(2+).

It localises to the cytoplasm. It carries out the reaction alpha-D-glucosamine 1-phosphate + acetyl-CoA = N-acetyl-alpha-D-glucosamine 1-phosphate + CoA + H(+). The enzyme catalyses N-acetyl-alpha-D-glucosamine 1-phosphate + UTP + H(+) = UDP-N-acetyl-alpha-D-glucosamine + diphosphate. It participates in nucleotide-sugar biosynthesis; UDP-N-acetyl-alpha-D-glucosamine biosynthesis; N-acetyl-alpha-D-glucosamine 1-phosphate from alpha-D-glucosamine 6-phosphate (route II): step 2/2. Its pathway is nucleotide-sugar biosynthesis; UDP-N-acetyl-alpha-D-glucosamine biosynthesis; UDP-N-acetyl-alpha-D-glucosamine from N-acetyl-alpha-D-glucosamine 1-phosphate: step 1/1. The protein operates within bacterial outer membrane biogenesis; LPS lipid A biosynthesis. Its function is as follows. Catalyzes the last two sequential reactions in the de novo biosynthetic pathway for UDP-N-acetylglucosamine (UDP-GlcNAc). The C-terminal domain catalyzes the transfer of acetyl group from acetyl coenzyme A to glucosamine-1-phosphate (GlcN-1-P) to produce N-acetylglucosamine-1-phosphate (GlcNAc-1-P), which is converted into UDP-GlcNAc by the transfer of uridine 5-monophosphate (from uridine 5-triphosphate), a reaction catalyzed by the N-terminal domain. The protein is Bifunctional protein GlmU of Synechococcus sp. (strain CC9605).